The primary structure comprises 157 residues: N5-carboxyaminoimidazole ribonucleotide mutase (157 aa).

Residues Ser-8, Asp-11, and Arg-38 each contribute to the substrate site.

It belongs to the AIR carboxylase family. Class I subfamily.

The catalysed reaction is 5-carboxyamino-1-(5-phospho-D-ribosyl)imidazole + H(+) = 5-amino-1-(5-phospho-D-ribosyl)imidazole-4-carboxylate. It functions in the pathway purine metabolism; IMP biosynthesis via de novo pathway; 5-amino-1-(5-phospho-D-ribosyl)imidazole-4-carboxylate from 5-amino-1-(5-phospho-D-ribosyl)imidazole (N5-CAIR route): step 2/2. Its function is as follows. Catalyzes the conversion of N5-carboxyaminoimidazole ribonucleotide (N5-CAIR) to 4-carboxy-5-aminoimidazole ribonucleotide (CAIR). In Methanocaldococcus jannaschii (strain ATCC 43067 / DSM 2661 / JAL-1 / JCM 10045 / NBRC 100440) (Methanococcus jannaschii), this protein is N5-carboxyaminoimidazole ribonucleotide mutase.